Reading from the N-terminus, the 737-residue chain is Procollagen-lysine,2-oxoglutarate 5-dioxygenase 2 (737 aa).

Residues Met1 to Gly25 form the signal peptide. 3 N-linked (GlcNAc...) asparagine glycosylation sites follow: Asn63, Asn209, and Asn297. Thr320 is subject to Phosphothreonine. Tyr323 bears the Phosphotyrosine mark. Asn365 and Asn522 each carry an N-linked (GlcNAc...) asparagine glycan. In terms of domain architecture, Fe2OG dioxygenase spans Lys644–Pro737. Positions 666 and 668 each coordinate Fe cation. N-linked (GlcNAc...) asparagine glycosylation occurs at Asn696. Lys704 carries the post-translational modification N6-succinyllysine. Fe cation is bound at residue His718. Asn725 carries an N-linked (GlcNAc...) asparagine glycan. Arg728 is an active-site residue.

In terms of assembly, homodimer. Requires Fe(2+) as cofactor. L-ascorbate serves as cofactor. Highly expressed in pancreas and muscle. Isoform 1 and isoform 2 are expressed in the majority of the examined cell types. Isoform 2 is specifically expressed in skin, lung, dura and aorta.

It is found in the rough endoplasmic reticulum membrane. The catalysed reaction is L-lysyl-[collagen] + 2-oxoglutarate + O2 = (5R)-5-hydroxy-L-lysyl-[collagen] + succinate + CO2. Functionally, forms hydroxylysine residues in -Xaa-Lys-Gly- sequences in collagens. These hydroxylysines serve as sites of attachment for carbohydrate units and are essential for the stability of the intermolecular collagen cross-links. The sequence is that of Procollagen-lysine,2-oxoglutarate 5-dioxygenase 2 from Homo sapiens (Human).